We begin with the raw amino-acid sequence, 309 residues long: Homoserine kinase (309 aa).

Residue 91–101 (PIGSGLGSSAC) coordinates ATP.

Belongs to the GHMP kinase family. Homoserine kinase subfamily.

It is found in the cytoplasm. The catalysed reaction is L-homoserine + ATP = O-phospho-L-homoserine + ADP + H(+). The protein operates within amino-acid biosynthesis; L-threonine biosynthesis; L-threonine from L-aspartate: step 4/5. In terms of biological role, catalyzes the ATP-dependent phosphorylation of L-homoserine to L-homoserine phosphate. The sequence is that of Homoserine kinase from Serratia proteamaculans (strain 568).